Reading from the N-terminus, the 214-residue chain is 3-isopropylmalate dehydratase small subunit (214 aa).

It belongs to the LeuD family. LeuD type 1 subfamily. As to quaternary structure, heterodimer of LeuC and LeuD.

The enzyme catalyses (2R,3S)-3-isopropylmalate = (2S)-2-isopropylmalate. The protein operates within amino-acid biosynthesis; L-leucine biosynthesis; L-leucine from 3-methyl-2-oxobutanoate: step 2/4. Functionally, catalyzes the isomerization between 2-isopropylmalate and 3-isopropylmalate, via the formation of 2-isopropylmaleate. This is 3-isopropylmalate dehydratase small subunit from Nitrosococcus oceani (strain ATCC 19707 / BCRC 17464 / JCM 30415 / NCIMB 11848 / C-107).